The following is a 507-amino-acid chain: E3 ubiquitin-protein ligase makorin-3 (507 aa).

Over residues 1–21 (MEEPAAPSEAHEAAGAQAGAE) the composition is skewed to low complexity. Disordered regions lie at residues 1–48 (MEEP…DSAL) and 69–89 (RGGL…PLPS). The C3H1-type 1 zinc-finger motif lies at 95–122 (WTKQIICRYYIHGQCKEGENCRYSHDLS). The tract at residues 126–149 (MATEGGVSPPGASAGGGPSTAAHI) is disordered. The segment at 238 to 265 (GSGLRFCYYASRGVCFRGESCMYLHGDI) adopts a C3H1-type 2 zinc-finger fold. The segment at 266-293 (CDMCGLQTLHPMDAAQREEHMRACIEAH) is makorin-type Cys-His. The segment at 311–365 (CGICMEVVYEKANPNDRRFGILSNCNHSFCIRCIRRWRSARQFENRIVKSCPQCR) adopts an RING-type zinc-finger fold. The C3H1-type 3 zinc-finger motif lies at 394 to 423 (AMSNKACRYFAEGRGNCPFGDTCFYKHEYP).

As to expression, ubiquitous.

It is found in the nucleus. The catalysed reaction is S-ubiquitinyl-[E2 ubiquitin-conjugating enzyme]-L-cysteine + [acceptor protein]-L-lysine = [E2 ubiquitin-conjugating enzyme]-L-cysteine + N(6)-ubiquitinyl-[acceptor protein]-L-lysine.. It functions in the pathway protein modification; protein ubiquitination. In terms of biological role, E3 ubiquitin ligase catalyzing the covalent attachment of ubiquitin moieties onto substrate proteins. Acts as a key developmental timer that helps ensure puberty begins at the appropriate age, by inhibiting premature activation of the reproductive hormone cascade. Epigenetically regulates GNRH1 transcription by disrupting the binding of methyl-DNA binding protein 3/MBD3 to the promoter of GNRH1. Mechanistically, mediates the non-proteolytic ubiquitination of MBD3 at multiple sites with 'Lys27' ubiquitin linkages and thereby regulates the methylation status of the genome, including GNRH1 promoter. Modulates the stability and translation of GNRH1 mRNA by mediating the non-proteolytic ubiquitination of PABP family members PABPC1, PABPC3 and PABPC4 at multiple sites. Also participates in the maintenance of genomic and epigenomic stability by regulating the abundance of APEX2 via 'Lys-48'-linked ubiquitination. The chain is E3 ubiquitin-protein ligase makorin-3 (MKRN3) from Homo sapiens (Human).